A 140-amino-acid chain; its full sequence is Thioredoxin M-type, chloroplastic (140 aa).

The N-terminal 34 residues, 1-34 (MALVARRAAVPSARSSARPAFARAAPRRSVVVRA), are a transit peptide targeting the chloroplast. The Thioredoxin domain maps to 35 to 140 (EAGAVNDDTF…IVQTVEKYLN (106 aa)). Active-site nucleophile residues include Cys-64 and Cys-67. An intrachain disulfide couples Cys-64 to Cys-67.

The protein belongs to the thioredoxin family. Plant M-type subfamily. In terms of assembly, forms a complex with heterodimeric ferredoxin-thioredoxin reductase (FTR) and ferredoxin.

It localises to the plastid. The protein resides in the chloroplast. In terms of biological role, participates in various redox reactions through the reversible oxidation of the active center dithiol to a disulfide. The M form is known to activate NADP-malate dehydrogenase. This Chlamydomonas reinhardtii (Chlamydomonas smithii) protein is Thioredoxin M-type, chloroplastic (TRXM).